A 761-amino-acid chain; its full sequence is MNWRFVELLYFLFIWGRISVQPSHQEPAGTDQHVSKEFDWLISDRGPFHHSRSYLSFVERHRQGFTTRYKIYREFARWKVRNTAIERRDLVRHPVPLMPEFQRSIRLLGRRPTTQQFIDTIIKKYGTHLLISATLGGEEALTMYMDKSRLDRKSGNATQSVEALHQLASSYFVDRDGTMRRLHEIQISTGAIKVTETRTGPLGCNSYDNLDSVSSVLLQSTESKLHLQGLQIIFPQYLQEKFVQSALSYIMCNGEGEYLCQNSQCRCQCAEEFPQCNCPITDIQIMEYTLANMAKSWAEAYKDLENSDEFKSFMKRLPSNHFLTIGSIHQHWGNDWDLQNRYKLLQSATEAQRQKIQRTARKLFGLSVRCRHNPNHQLPRERTIQQWLARVQSLLYCNENGFWGTFLESQRSCVCHGSTTLCQRPIPCVIGGNNSCAMCSLANISLCGSCNKGYKLYRGRCEPQNVDSERSEQFISFETDLDFQDLELKYLLQKMDSRLYVHTTFISNEIRLDTFFDPRWRKRMSLTLKSNKNRMDFIHMVIGMSMRICQMRNSSLDPMFFVYVNPFSGSHSEGWNMPFGEFGYPRWEKIRLQNSQCYNWTLLLGNRWKTFFETVHIYLRSRTRLPTLLRNETGQGPVDLSDPSKRQFYIKISDVQVFGYSLRFNADLLRSAVQQVNQSYTQGGQFYSSSSVMLLLLDIRDRINRLAPPVAPGKPQLDLFSCMLKHRLKLTNSEIIRVNHALDLYNTEILKQSDQMTAKLC.

Positions Met-1–Ser-19 are cleaved as a signal peptide. The 184-residue stretch at Arg-68 to Met-251 folds into the MACPF domain. 7 N-linked (GlcNAc...) asparagine glycosylation sites follow: Asn-156, Asn-433, Asn-443, Asn-553, Asn-599, Asn-631, and Asn-677.

Belongs to the BRINP family. As to expression, highly expressed in brain. Weakly expressed in heart, lung, skeletal muscle, kidney, thymus, prostate, testis and small intestine.

The protein resides in the cytoplasm. Its function is as follows. Plays a role in neurogenesis and brain development. May suppress cell cycle progression in postmitotic neurons by inhibiting G1/S transition. The sequence is that of BMP/retinoic acid-inducible neural-specific protein 1 (BRINP1) from Homo sapiens (Human).